Consider the following 227-residue polypeptide: ATP-dependent dethiobiotin synthetase BioD (227 aa).

12 to 17 contributes to the ATP binding site; sequence DAGKTH. T16 contributes to the Mg(2+) binding site. The active site involves K37. A substrate-binding site is contributed by S41. ATP-binding positions include D54, 116–119, 176–177, and 205–207; these read EGAG, NQ, and PYS. Positions 54 and 116 each coordinate Mg(2+).

This sequence belongs to the dethiobiotin synthetase family. In terms of assembly, homodimer. Requires Mg(2+) as cofactor.

It is found in the cytoplasm. The catalysed reaction is (7R,8S)-7,8-diammoniononanoate + CO2 + ATP = (4R,5S)-dethiobiotin + ADP + phosphate + 3 H(+). The protein operates within cofactor biosynthesis; biotin biosynthesis; biotin from 7,8-diaminononanoate: step 1/2. Functionally, catalyzes a mechanistically unusual reaction, the ATP-dependent insertion of CO2 between the N7 and N8 nitrogen atoms of 7,8-diaminopelargonic acid (DAPA, also called 7,8-diammoniononanoate) to form a ureido ring. In Pseudoalteromonas translucida (strain TAC 125), this protein is ATP-dependent dethiobiotin synthetase BioD.